The sequence spans 331 residues: FMRFamide-related neuropeptides (331 aa).

The first 25 residues, 1–25, serve as a signal peptide directing secretion; it reads MRCWSPCSLLVVIAIYCLSSHTSEA. A propeptide spanning residues 26–65 is cleaved from the precursor; it reads FDLAQACVESQRLSLLPICDTIFAVQQEGAQQSADDGLRS. Phe71 and Phe83 each carry phenylalanine amide. Residues 86–94 constitute a propeptide that is removed on maturation; the sequence is NVPDLPFED. Residue Phe100 is modified to Phenylalanine amide. The propeptide occupies 103–168; sequence AAPQLDDLLK…YVDDVEDSDV (66 aa). Residues 122–153 form a disordered region; that stretch reads QKSDDTSVRRKRSTDAAPQSNTDSAEQKNDSA. Residues Phe174 and Phe181 each carry the phenylalanine amide modification. Residues 184 to 194 constitute a propeptide that is removed on maturation; sequence NPSDVGSKLTE. Phe200 carries the phenylalanine amide modification. A propeptide spanning residues 203-205 is cleaved from the precursor; it reads DPE. At Phe211 the chain carries Phenylalanine amide. A propeptide spanning residues 214 to 216 is cleaved from the precursor; that stretch reads SDD. Phe222 carries the phenylalanine amide modification. A propeptide spanning residues 225–236 is cleaved from the precursor; the sequence is NPGDAEDELEED. Phe242 is modified (phenylalanine amide). The propeptide occupies 245 to 254; that stretch reads GDEEDEEEAE. Phenylalanine amide is present on Phe260. Residues 263-265 constitute a propeptide that is removed on maturation; that stretch reads DPE. Phe271 carries the phenylalanine amide modification. Positions 274–277 are excised as a propeptide; it reads NGEE. Phe283 carries the phenylalanine amide modification. Positions 286–293 are excised as a propeptide; the sequence is NPEEPEAD. Phe299 bears the Phenylalanine amide mark. A propeptide spanning residues 302–312 is cleaved from the precursor; it reads GGEEDDVNTEE. Phe318 carries the phenylalanine amide modification. Positions 321 to 331 are excised as a propeptide; that stretch reads SAEKCKGCLEG.

This sequence belongs to the FARP (FMRFamide related peptide) family. Present ubiquitously in the brain and regions of the central nervous system as well as in the periphery and throughout the dermal chromatophore layer (at protein level).

It localises to the secreted. Its function is as follows. Excitatory neurotransmitters that directly modulate chromatophore function by activating chromatophore expansion at the chromatophore neuromuscular junction. The protein is FMRFamide-related neuropeptides of Sepia officinalis (Common cuttlefish).